Reading from the N-terminus, the 423-residue chain is Glucose-1-phosphate adenylyltransferase (423 aa).

Residues Tyr-98, Gly-163, 178–179 (EK), and Ser-189 each bind alpha-D-glucose 1-phosphate.

This sequence belongs to the bacterial/plant glucose-1-phosphate adenylyltransferase family. Homotetramer.

It catalyses the reaction alpha-D-glucose 1-phosphate + ATP + H(+) = ADP-alpha-D-glucose + diphosphate. Its pathway is glycan biosynthesis; glycogen biosynthesis. In terms of biological role, involved in the biosynthesis of ADP-glucose, a building block required for the elongation reactions to produce glycogen. Catalyzes the reaction between ATP and alpha-D-glucose 1-phosphate (G1P) to produce pyrophosphate and ADP-Glc. This Thermotoga sp. (strain RQ2) protein is Glucose-1-phosphate adenylyltransferase.